The chain runs to 185 residues: Peroxynitrite isomerase (185 aa).

Residues M1–A21 form a disordered region. The GXWXGXG signature appears at G34–G40. Heme b is bound at residue H171.

The protein belongs to the nitrobindin family. In terms of assembly, homodimer. Heme b serves as cofactor.

It catalyses the reaction peroxynitrite = nitrate. It participates in nitrogen metabolism. Its function is as follows. Heme-binding protein able to scavenge peroxynitrite and to protect free L-tyrosine against peroxynitrite-mediated nitration, by acting as a peroxynitrite isomerase that converts peroxynitrite to nitrate. Therefore, this protein likely plays a role in peroxynitrite sensing and in the detoxification of reactive nitrogen and oxygen species (RNS and ROS, respectively). Is able to bind nitric oxide (NO) in vitro, but may act as a sensor of peroxynitrite levels in vivo. This chain is Peroxynitrite isomerase, found in Streptomyces griseus subsp. griseus (strain JCM 4626 / CBS 651.72 / NBRC 13350 / KCC S-0626 / ISP 5235).